We begin with the raw amino-acid sequence, 159 residues long: METKETESSVELRHIVRIYNTDLDGKKQVQMALTGIKGVGRRLARVFAVKAGVDPCATLGKLPEEQIEALKNVIESVRDNIPAWMMNRRKDIITGVDKHVMGAEVLTTLREDLDIMKKTRSYKGIRHELGLRVRGQRTRSTGRSGATVGVTRKKTQAKK.

The disordered stretch occupies residues 136–159 (QRTRSTGRSGATVGVTRKKTQAKK). The segment covering 138–149 (TRSTGRSGATVG) has biased composition (low complexity).

The protein belongs to the universal ribosomal protein uS13 family. Part of the 30S ribosomal subunit. Forms a loose heterodimer with protein S19. Forms two bridges to the 50S subunit in the 70S ribosome.

Functionally, located at the top of the head of the 30S subunit, it contacts several helices of the 16S rRNA. In the 70S ribosome it contacts the 23S rRNA (bridge B1a) and protein L5 of the 50S subunit (bridge B1b), connecting the 2 subunits; these bridges are implicated in subunit movement. In Methanothrix thermoacetophila (strain DSM 6194 / JCM 14653 / NBRC 101360 / PT) (Methanosaeta thermophila), this protein is Small ribosomal subunit protein uS13.